Reading from the N-terminus, the 361-residue chain is Free fatty acid receptor 4 (361 aa).

Positions 1–21 (MSPECAQTTGPGPSRTPDQVN) are disordered. The Extracellular segment spans residues 1–45 (MSPECAQTTGPGPSRTPDQVNRTHFPFFSDVKGDHRLVLSVLETT). N21 carries an N-linked (GlcNAc...) asparagine glycan. The chain crosses the membrane as a helical span at residues 46–66 (VLGLIFVVSLLGNVCALVLVV). Over 67–77 (RRRRRGATVSL) the chain is Cytoplasmic. Residues 78 to 98 (VLNLFCADLLFTSAIPLVLVV) form a helical membrane-spanning segment. Topologically, residues 99 to 103 (RWTEA) are extracellular. Residues 104–124 (WLLGPVVCHLLFYVMTMSGSV) traverse the membrane as a helical segment. C111 and C194 are disulfide-bonded. The Cytoplasmic segment spans residues 125 to 156 (TILTLAAVSLERMVCIVRLRRGLSGPGRRTQA). Residues 157-177 (ALLAFIWGYSALAALPLCILF) traverse the membrane as a helical segment. Topologically, residues 178–204 (RVVPQRLPGGDQEIPICTLDWPNRIGE) are extracellular. The chain crosses the membrane as a helical span at residues 205 to 225 (ISWDVFFVTLNFLVPGLVIVI). Residues 226–268 (SYSKILQITKASRKRLTLSLAYSESHQIRVSQQDYRLFRTLFL) are Cytoplasmic-facing. The chain crosses the membrane as a helical span at residues 269–289 (LMVSFFIMWSPIIITILLILI). The Extracellular segment spans residues 290–295 (QNFRQD). Residues 296-316 (LVIWPSLFFWVVAFTFANSAL) form a helical membrane-spanning segment. The Cytoplasmic portion of the chain corresponds to 317–361 (NPILYNMSLFRSEWRKIFCCFFFPEKGAIFTETSIRRNDLSVIST). Phosphothreonine occurs at positions 347 and 349. Phosphoserine is present on residues S350, S357, and S360.

The protein belongs to the G-protein coupled receptor 1 family. Interacts (via C-terminus) with ARRB2 following LCFAs stimulation. In terms of processing, phosphorylated at two clusters of Ser and Thr residues located in the intracellular C-terminus. Prerequisite for FFAR4 internalization via an ARRB2-dependent pathway.

The protein localises to the cell membrane. Its subcellular location is the endosome membrane. It localises to the lysosome membrane. The protein resides in the cell projection. It is found in the cilium membrane. Its function is as follows. G-protein-coupled receptor for long-chain fatty acids (LCFAs) with a major role in adipogenesis, energy metabolism and inflammation. Signals via G-protein and beta-arrestin pathways. LCFAs sensing initiates activation of phosphoinositidase C-linked G proteins GNAQ and GNA11 (G(q)/G(11)), inducing a variety of cellular responses via second messenger pathways such as intracellular calcium mobilization, modulation of cyclic adenosine monophosphate (cAMP) production, and mitogen-activated protein kinases (MAPKs). After LCFAs binding, associates with beta-arrestin ARRB2 that acts as an adapter protein coupling the receptor to specific downstream signaling pathways, as well as mediating receptor endocytosis. In response to dietary fats, plays an important role in the regulation of adipocyte proliferation and differentiation. Acts as a receptor for omega-3 polyunsaturated fatty acids (PUFAs) at primary cilium of perivascular preadipocytes, initiating an adipogenic program via cAMP and CTCF-dependent chromatin remodeling that ultimately results in transcriptional activation of adipogenic genes and cell cycle entry. Induces differentiation of brown and beige adipocytes probably via autocrine and endocrine functions of FGF21 hormone. Contributes to the thermogenic activation of brown adipose tissue and the browning of white adipose tissue. Activates brown adipocytes by initiating intracellular calcium signaling leading to mitochondrial depolarization and fission, and overall increased mitochondrial respiration. Consequently stimulates fatty acid uptake and oxidation in mitochondria together with UCP1-mediated thermogenic respiration, eventually reducing fat mass. Regulates bi-potential differentiation of bone marrow mesenchymal stem cells toward osteoblasts or adipocytes likely by up-regulating distinct integrins. In response to dietary fats regulates hormone secretion and appetite. Stimulates GIP and GLP1 secretion from enteroendocrine cells as well as GCG secretion in pancreatic alpha cells, thereby playing a role in the regulation of blood glucose levels. Negatively regulates glucose-induced SST secretion in pancreatic delta cells. Mediates LCFAs inhibition of GHRL secretion, an appetite-controlling hormone. In taste buds, contributes to sensing of dietary fatty acids by the gustatory system. During the inflammatory response, promotes anti-inflammatory M2 macrophage differentiation in adipose tissue. Mediates the anti-inflammatory effects of omega-3 PUFAs via inhibition of NLRP3 inflammasome activation. In this pathway, interacts with adapter protein ARRB2 and inhibits the priming step triggered by Toll-like receptors (TLRs) at the level of TAK1 and TAB1. Further inhibits the activation step when ARRB2 directly associates with NLRP3, leading to inhibition of pro-inflammatory cytokine release. Mediates LCFAs anti-apoptotic effects. This is Free fatty acid receptor 4 (Ffar4) from Rattus norvegicus (Rat).